Here is a 416-residue protein sequence, read N- to C-terminus: Tyrosine--tRNA ligase (416 aa).

Y40 is a binding site for L-tyrosine. A 'HIGH' region motif is present at residues 45 to 54 (ATAKSLHVGS). Residues Y177 and Q181 each coordinate L-tyrosine. A 'KMSKS' region motif is present at residues 237-241 (KMGKS). An ATP-binding site is contributed by K240. An S4 RNA-binding domain is found at 351 to 415 (ISIVQLIVKS…GKKRHAMVQL (65 aa)).

Belongs to the class-I aminoacyl-tRNA synthetase family. TyrS type 1 subfamily. Homodimer.

It is found in the cytoplasm. It catalyses the reaction tRNA(Tyr) + L-tyrosine + ATP = L-tyrosyl-tRNA(Tyr) + AMP + diphosphate + H(+). In terms of biological role, catalyzes the attachment of tyrosine to tRNA(Tyr) in a two-step reaction: tyrosine is first activated by ATP to form Tyr-AMP and then transferred to the acceptor end of tRNA(Tyr). The protein is Tyrosine--tRNA ligase of Roseobacter denitrificans (strain ATCC 33942 / OCh 114) (Erythrobacter sp. (strain OCh 114)).